The chain runs to 61 residues: Small ribosomal subunit protein uS14 (61 aa).

Zn(2+) contacts are provided by cysteine 24, cysteine 27, cysteine 40, and cysteine 43.

It belongs to the universal ribosomal protein uS14 family. Zinc-binding uS14 subfamily. As to quaternary structure, part of the 30S ribosomal subunit. Contacts proteins S3 and S10. Requires Zn(2+) as cofactor.

Binds 16S rRNA, required for the assembly of 30S particles and may also be responsible for determining the conformation of the 16S rRNA at the A site. The polypeptide is Small ribosomal subunit protein uS14 (Beutenbergia cavernae (strain ATCC BAA-8 / DSM 12333 / CCUG 43141 / JCM 11478 / NBRC 16432 / NCIMB 13614 / HKI 0122)).